The sequence spans 128 residues: uncharacterized protein (128 aa).

The next 4 membrane-spanning stretches (helical) occupy residues 5-25, 27-47, 60-80, and 87-107; these read ILALLIWSSSLIVGKLTYSMM, PVLVVQVRLIIAMIIVMPLFL, QLWWLAFFNYTAVFLLQFIGL, and SAVTMIGLEPLLVVFVGHFFF. In terms of domain architecture, EamA spans 9–110; that stretch reads LIWSSSLIVG…FVGHFFFKTK (102 aa).

It is found in the cell membrane. This is an uncharacterized protein from Haemophilus influenzae (strain ATCC 51907 / DSM 11121 / KW20 / Rd).